We begin with the raw amino-acid sequence, 114 residues long: Small ribosomal subunit protein uS13m (114 aa).

The segment at 92–114 (DGLPLRGQRSHTNARTSRKRIRK) is disordered.

The protein belongs to the universal ribosomal protein uS13 family. In terms of assembly, part of the small ribosomal subunit.

The protein localises to the mitochondrion. Located at the top of the head of the small subunit, it contacts several helices of the 18S rRNA. This Oenothera berteroana (Bertero's evening primrose) protein is Small ribosomal subunit protein uS13m (RPS13).